Consider the following 433-residue polypeptide: Protein translocase subunit SecY (433 aa).

Helical transmembrane passes span 17-37 (IVFTILILIVCRFGSFIPIPG), 71-91 (IFALAIMPYITASIIIQLMSV), 117-137 (LTVLLASFQAYGVAISLESIV), 141-161 (GPVVILAGFFFRITTVITLVV), 184-204 (LIIFIGIISGVPSAIISMFEL), 212-232 (PLIAIAVCIGVVVLIAIIIFF), 268-288 (GVIPPIFASSILLFPATLANF), 310-330 (YILLYVALIMFFSFFYTAIVF), 366-386 (LTVIGGIYLSVICVIPELLMN), and 388-408 (YVISLSLGGTSFLIVVNVVLD).

This sequence belongs to the SecY/SEC61-alpha family. In terms of assembly, component of the Sec protein translocase complex. Heterotrimer consisting of SecY, SecE and SecG subunits. The heterotrimers can form oligomers, although 1 heterotrimer is thought to be able to translocate proteins. Interacts with the ribosome. Interacts with SecDF, and other proteins may be involved. Interacts with SecA.

It localises to the cell inner membrane. Its function is as follows. The central subunit of the protein translocation channel SecYEG. Consists of two halves formed by TMs 1-5 and 6-10. These two domains form a lateral gate at the front which open onto the bilayer between TMs 2 and 7, and are clamped together by SecE at the back. The channel is closed by both a pore ring composed of hydrophobic SecY resides and a short helix (helix 2A) on the extracellular side of the membrane which forms a plug. The plug probably moves laterally to allow the channel to open. The ring and the pore may move independently. This chain is Protein translocase subunit SecY, found in Rickettsia conorii (strain ATCC VR-613 / Malish 7).